The chain runs to 328 residues: Zinc chaperone YeiR (328 aa).

9–17 lines the GTP pocket; the sequence is GFLGSGKTT. A CXCC motif motif is present at residues 63–66; the sequence is CMCC. Residue D155 coordinates GTP. The CobW C-terminal domain maps to 241–321; that stretch reads CGWIFDADTV…WNALQSALLK (81 aa).

Belongs to the SIMIBI class G3E GTPase family. ZNG1 subfamily. Oligomerizes in the presence of Zn(2+).

The enzyme catalyses GTP + H2O = GDP + phosphate + H(+). Its activity is regulated as follows. GTPase activity is enhanced by Zn(2+) binding. Its function is as follows. Zinc chaperone that directly transfers zinc cofactor to target proteins, thereby activating them. Zinc is transferred from the CXCC motif in the GTPase domain to the zinc binding site in target proteins in a process requiring GTP hydrolysis. The polypeptide is Zinc chaperone YeiR (yeiR) (Escherichia coli (strain K12)).